The chain runs to 126 residues: uncharacterized protein (126 aa).

The N-terminal stretch at 1-23 (MLKKLIMGFFLLILLGIAGVAVM) is a signal peptide.

This is an uncharacterized protein from Archaeoglobus fulgidus (strain ATCC 49558 / DSM 4304 / JCM 9628 / NBRC 100126 / VC-16).